The primary structure comprises 522 residues: Tetratricopeptide repeat and J domain-containing co-chaperone DNJ1 (522 aa).

The signal sequence occupies residues 1–22 (MKGFLLVALPVLFLSLSTQVFG). TPR repeat units lie at residues 29–62 (AAQI…DPTG), 63–96 (YANY…NPGF), 97–130 (VQAH…KSDS), 142–175 (GEAA…GPNS), 210–243 (TYLP…DPDS), 256–289 (LEKD…LVRF), and 356–389 (VDSW…SGRS). The 62-residue stretch at 410–471 (DYYKVLGVPR…ELRQRYDNGD (62 aa)) folds into the J domain. The tract at residues 465–494 (QRYDNGDDPNDPTGGQQHNPFAHHGGGMPF) is disordered.

Its subcellular location is the endoplasmic reticulum lumen. Functionally, endoplasmic reticulum co-chaperone crucial for survival and virulence factor production at elevated temperatures representative of febrile patients during infection. Contributes to virulence in a mouse model of cryptococcosis. With chaperone CNE1, coordinately maintains ER homeostasis and contributes to maintenance of cell wall architecture. The protein is Tetratricopeptide repeat and J domain-containing co-chaperone DNJ1 of Cryptococcus neoformans var. grubii serotype A (strain H99 / ATCC 208821 / CBS 10515 / FGSC 9487) (Filobasidiella neoformans var. grubii).